The sequence spans 807 residues: Glycerol-3-phosphate acyltransferase (807 aa).

The HXXXXD motif motif lies at 306–311 (HRSHMD).

The protein belongs to the GPAT/DAPAT family.

The protein resides in the cell inner membrane. It catalyses the reaction sn-glycerol 3-phosphate + an acyl-CoA = a 1-acyl-sn-glycero-3-phosphate + CoA. The protein operates within phospholipid metabolism; CDP-diacylglycerol biosynthesis; CDP-diacylglycerol from sn-glycerol 3-phosphate: step 1/3. In Escherichia coli O157:H7, this protein is Glycerol-3-phosphate acyltransferase (plsB).